Reading from the N-terminus, the 694-residue chain is Elongation factor G (694 aa).

In terms of domain architecture, tr-type G spans 12–286 (SKLRNIGIMA…AVVDYLPSPI (275 aa)). GTP is bound by residues 21–28 (AHIDAGKT), 85–89 (DTPGH), and 139–142 (NKMD).

The protein belongs to the TRAFAC class translation factor GTPase superfamily. Classic translation factor GTPase family. EF-G/EF-2 subfamily.

The protein localises to the cytoplasm. Functionally, catalyzes the GTP-dependent ribosomal translocation step during translation elongation. During this step, the ribosome changes from the pre-translocational (PRE) to the post-translocational (POST) state as the newly formed A-site-bound peptidyl-tRNA and P-site-bound deacylated tRNA move to the P and E sites, respectively. Catalyzes the coordinated movement of the two tRNA molecules, the mRNA and conformational changes in the ribosome. The polypeptide is Elongation factor G (Pseudothermotoga lettingae (strain ATCC BAA-301 / DSM 14385 / NBRC 107922 / TMO) (Thermotoga lettingae)).